Here is a 171-residue protein sequence, read N- to C-terminus: Acetyltransferase PA2271 (171 aa).

One can recognise an N-acetyltransferase domain in the interval 3 to 162; sequence YRIRTSRDED…HEQEIGFAAD (160 aa). CoA is bound by residues 84 to 86 and 128 to 130; these read LSI and PFY.

Its function is as follows. Catalyzes the transfer of an acetyl group from acetyl coenzyme A (AcCoA) to an acceptor substrate and releases both CoA and the acetylated product. It can use a variety of substrates including spermidine, spermine and N(8)-acetylspermidine, 7-aminocephalosporanic acid, colistin and thiamine. The protein is Acetyltransferase PA2271 of Pseudomonas aeruginosa (strain ATCC 15692 / DSM 22644 / CIP 104116 / JCM 14847 / LMG 12228 / 1C / PRS 101 / PAO1).